We begin with the raw amino-acid sequence, 249 residues long: Ubiquinone biosynthesis O-methyltransferase (249 aa).

Residues R44, G75, D96, and M138 each contribute to the S-adenosyl-L-methionine site.

This sequence belongs to the methyltransferase superfamily. UbiG/COQ3 family.

The enzyme catalyses a 3-demethylubiquinol + S-adenosyl-L-methionine = a ubiquinol + S-adenosyl-L-homocysteine + H(+). It carries out the reaction a 3-(all-trans-polyprenyl)benzene-1,2-diol + S-adenosyl-L-methionine = a 2-methoxy-6-(all-trans-polyprenyl)phenol + S-adenosyl-L-homocysteine + H(+). It functions in the pathway cofactor biosynthesis; ubiquinone biosynthesis. In terms of biological role, O-methyltransferase that catalyzes the 2 O-methylation steps in the ubiquinone biosynthetic pathway. The protein is Ubiquinone biosynthesis O-methyltransferase of Paramagnetospirillum magneticum (strain ATCC 700264 / AMB-1) (Magnetospirillum magneticum).